We begin with the raw amino-acid sequence, 130 residues long: Ribosome-binding factor A (130 aa).

It belongs to the RbfA family. As to quaternary structure, monomer. Binds 30S ribosomal subunits, but not 50S ribosomal subunits or 70S ribosomes.

It is found in the cytoplasm. Functionally, one of several proteins that assist in the late maturation steps of the functional core of the 30S ribosomal subunit. Associates with free 30S ribosomal subunits (but not with 30S subunits that are part of 70S ribosomes or polysomes). Required for efficient processing of 16S rRNA. May interact with the 5'-terminal helix region of 16S rRNA. The polypeptide is Ribosome-binding factor A (Flavobacterium psychrophilum (strain ATCC 49511 / DSM 21280 / CIP 103535 / JIP02/86)).